A 197-amino-acid chain; its full sequence is MSEGLFKKLEEVQRKLAERIVERPLEVSKIKTVGAVDVSYRDERARAAFVLCSFPDCELLKQRVVEVDVSFPYIPTFFFLRETRPVLIALGKERPDVLLVEGHGRAHPRGYGLASHIGLVLGIPTIGISKRLLRGTPEGSWVKVGKAYVSVGHLIDLPSAVEVVKTLNKNGYPLPLRIADRLSRGHTSWSGGVNDEH.

2 residues coordinate Mg(2+): D37 and E101.

This sequence belongs to the endonuclease V family. Mg(2+) is required as a cofactor.

It is found in the cytoplasm. It carries out the reaction Endonucleolytic cleavage at apurinic or apyrimidinic sites to products with a 5'-phosphate.. DNA repair enzyme involved in the repair of deaminated bases. Selectively cleaves double-stranded DNA at the second phosphodiester bond 3' to a deoxyinosine leaving behind the intact lesion on the nicked DNA. The sequence is that of Endonuclease V from Thermococcus kodakarensis (strain ATCC BAA-918 / JCM 12380 / KOD1) (Pyrococcus kodakaraensis (strain KOD1)).